A 425-amino-acid polypeptide reads, in one-letter code: MSHIRHLAQQCRDAARILATLSTDAKRRLLETMATALNTDAATILAANAADLDAARTQQVGTAMLDRLALDPQRLAAMADALRDIAALPDPVGQVTRDDRRPNGIHIQKIRVPLGVIAMIYEARPNVTADAAALCIKAGNGIILRGGSEAIRSNIAIATALQRALRLASLPETALILVQDMARHTMLELLQLSDLIDLVIPRGGEGLIRFVAEHARIPVIKHYKGVCHQFVDASADIEMAIRLLIDGKTTRPAACNALETLLVHTDIAPRFLPAAAAALRPYGVQLRGDHATCTLLPDVLLATDADYAAEYLDLILAIRIVPNLDAALEHIRRYGSDHTEVIVTADPAHADTFVQQLPSAVVMVNASSRFSDGGALGLGAEIGISTTRLHAYGPMGLDALTVERFVVRGQGQVRHCPPYPPAPRR.

The protein belongs to the gamma-glutamyl phosphate reductase family.

It localises to the cytoplasm. It carries out the reaction L-glutamate 5-semialdehyde + phosphate + NADP(+) = L-glutamyl 5-phosphate + NADPH + H(+). It functions in the pathway amino-acid biosynthesis; L-proline biosynthesis; L-glutamate 5-semialdehyde from L-glutamate: step 2/2. Its function is as follows. Catalyzes the NADPH-dependent reduction of L-glutamate 5-phosphate into L-glutamate 5-semialdehyde and phosphate. The product spontaneously undergoes cyclization to form 1-pyrroline-5-carboxylate. This Xylella fastidiosa (strain M23) protein is Gamma-glutamyl phosphate reductase.